The chain runs to 314 residues: Ribosomal RNA small subunit methyltransferase H (314 aa).

S-adenosyl-L-methionine contacts are provided by residues 58-60 (GGH), D76, F103, D119, and Q126.

The protein belongs to the methyltransferase superfamily. RsmH family.

The protein localises to the cytoplasm. It carries out the reaction cytidine(1402) in 16S rRNA + S-adenosyl-L-methionine = N(4)-methylcytidine(1402) in 16S rRNA + S-adenosyl-L-homocysteine + H(+). Specifically methylates the N4 position of cytidine in position 1402 (C1402) of 16S rRNA. The protein is Ribosomal RNA small subunit methyltransferase H of Gloeobacter violaceus (strain ATCC 29082 / PCC 7421).